The sequence spans 309 residues: Protease HtpX homolog (309 aa).

Transmembrane regions (helical) follow at residues 7-27 (FILL…IGGP) and 28-48 (TGML…YWNA). Residue histidine 134 coordinates Zn(2+). Glutamate 135 is a catalytic residue. Histidine 138 serves as a coordination point for Zn(2+). The next 2 helical transmembrane spans lie at 149 to 169 (VTAT…FFGG) and 177 to 197 (PGGL…AMLV). Glutamate 206 provides a ligand contact to Zn(2+). The disordered stretch occupies residues 289 to 309 (TRGRSGTAVPTGATGKSGPWG).

This sequence belongs to the peptidase M48B family. Requires Zn(2+) as cofactor.

The protein resides in the cell inner membrane. This is Protease HtpX homolog from Caulobacter sp. (strain K31).